Consider the following 513-residue polypeptide: MQLNPTEISELIKKRIASYDAAAQARTEGTVVSLSDGIVRLHGLADVMQGEMIEFPGNTYGLALNLERDSVGAVVLGDYKHIKEGDTARCTGRILEVPVGEALLGRVVNSLGMAVDGKGAIDTSLTSPIEKIAPGVIERQSVDQPVQTGLKAIDAMVPIGRGQRELIIGDRQTGKTAVAVDAIINQKGTGVKCIYVAVGQKASSIANVVTKLEQHGALEHTIIVAATASESAAMQFIAPYAGCAMGEYFRDRGQDALIIYDDLTKQAWAYRQVSLLLRRPPGREAYPGDVFYLHSRLLERASRVNAEYVEKFTNGEVKGKTGSLTALPIIETQAGDVSAFVPTNVISITDGQIFLETDLFNAGIRPAINAGLSVSRVGGAAQTKIIKKLGGGVRLALAQYRELAAFSQFASDLDELTRKQLERGKRVTELMKQGQFSPMSVAEMAFSLFAANEGYLDDVDAKKVVDFEKAMLDFLRSSKTDLLAKINEKGDYNDDIQAGMKAALDEFKAKHSW.

G169–T176 lines the ATP pocket.

The protein belongs to the ATPase alpha/beta chains family. F-type ATPases have 2 components, CF(1) - the catalytic core - and CF(0) - the membrane proton channel. CF(1) has five subunits: alpha(3), beta(3), gamma(1), delta(1), epsilon(1). CF(0) has three main subunits: a(1), b(2) and c(9-12). The alpha and beta chains form an alternating ring which encloses part of the gamma chain. CF(1) is attached to CF(0) by a central stalk formed by the gamma and epsilon chains, while a peripheral stalk is formed by the delta and b chains.

It is found in the cell inner membrane. It catalyses the reaction ATP + H2O + 4 H(+)(in) = ADP + phosphate + 5 H(+)(out). Produces ATP from ADP in the presence of a proton gradient across the membrane. The alpha chain is a regulatory subunit. This is ATP synthase subunit alpha from Thioalkalivibrio sulfidiphilus (strain HL-EbGR7).